Reading from the N-terminus, the 520-residue chain is Chaperone Ric-8B (520 aa).

Ser468 carries the post-translational modification Phosphoserine. Thr473 is subject to Phosphothreonine.

Belongs to the synembryn family. In terms of assembly, interacts with GDP-bound G(s) G-alpha proteins GNAL and GNAS. Does not interact with G-alpha proteins when they are in complex with subunits beta and gamma.

The protein localises to the cytoplasm. The protein resides in the cell cortex. In terms of biological role, chaperone that specifically binds and folds nascent G(s) G-alpha proteins (GNAS and GNAL) prior to G protein heterotrimer formation, promoting their association with the plasma membrane. Also acts as a guanine nucleotide exchange factor (GEF) for G(s) proteins by stimulating exchange of bound GDP for free GTP. Acts as an important component for odorant signal transduction by mediating GNAL (G(olf)-alpha) folding, thereby promoting-dependent cAMP accumulation in olfactory sensory neurons. This Rattus norvegicus (Rat) protein is Chaperone Ric-8B (Ric8b).